The sequence spans 136 residues: Nucleoside diphosphate kinase (136 aa).

Positions 10, 58, 86, 92, 104, and 114 each coordinate ATP. The active-site Pros-phosphohistidine intermediate is His117.

It belongs to the NDK family. In terms of assembly, homotetramer. Mg(2+) serves as cofactor.

It is found in the cytoplasm. It catalyses the reaction a 2'-deoxyribonucleoside 5'-diphosphate + ATP = a 2'-deoxyribonucleoside 5'-triphosphate + ADP. It carries out the reaction a ribonucleoside 5'-diphosphate + ATP = a ribonucleoside 5'-triphosphate + ADP. Functionally, major role in the synthesis of nucleoside triphosphates other than ATP. The ATP gamma phosphate is transferred to the NDP beta phosphate via a ping-pong mechanism, using a phosphorylated active-site intermediate. The protein is Nucleoside diphosphate kinase of Mycobacterium sp. (strain MCS).